Here is a 210-residue protein sequence, read N- to C-terminus: Cell division protein SepF (210 aa).

Residues 13 to 78 form a disordered region; that stretch reads GFGEPTGYDY…VTSTAMNPPM (66 aa). Residues 22–31 show a composition bias toward acidic residues; the sequence is YDYDEMEGDD. Over residues 47 to 60 the composition is skewed to basic and acidic residues; that stretch reads RSEEPHPRPSEPEM. Residues 64–78 are compositionally biased toward polar residues; it reads VNTSAVTSTAMNPPM.

Belongs to the SepF family. As to quaternary structure, homodimer. Interacts with FtsZ.

It localises to the cytoplasm. Cell division protein that is part of the divisome complex and is recruited early to the Z-ring. Probably stimulates Z-ring formation, perhaps through the cross-linking of FtsZ protofilaments. Its function overlaps with FtsA. This is Cell division protein SepF from Cyanothece sp. (strain PCC 7425 / ATCC 29141).